The following is a 561-amino-acid chain: Arginine--tRNA ligase (561 aa).

A 'HIGH' region motif is present at residues 128–138; the sequence is ANPTGPLHVGH.

It belongs to the class-I aminoacyl-tRNA synthetase family. In terms of assembly, monomer.

The protein resides in the cytoplasm. The catalysed reaction is tRNA(Arg) + L-arginine + ATP = L-arginyl-tRNA(Arg) + AMP + diphosphate. The sequence is that of Arginine--tRNA ligase from Marinobacter nauticus (strain ATCC 700491 / DSM 11845 / VT8) (Marinobacter aquaeolei).